Reading from the N-terminus, the 341-residue chain is Phosphate acyltransferase (341 aa).

Belongs to the PlsX family. As to quaternary structure, homodimer. Probably interacts with PlsY.

It localises to the cytoplasm. The catalysed reaction is a fatty acyl-[ACP] + phosphate = an acyl phosphate + holo-[ACP]. It participates in lipid metabolism; phospholipid metabolism. In terms of biological role, catalyzes the reversible formation of acyl-phosphate (acyl-PO(4)) from acyl-[acyl-carrier-protein] (acyl-ACP). This enzyme utilizes acyl-ACP as fatty acyl donor, but not acyl-CoA. The polypeptide is Phosphate acyltransferase (Aliivibrio salmonicida (strain LFI1238) (Vibrio salmonicida (strain LFI1238))).